Reading from the N-terminus, the 309-residue chain is uncharacterized protein (309 aa).

Solcar repeat units follow at residues 6–83, 97–211, and 216–302; these read SDLY…LCHS, LTGY…FKRL, and NDKA…VSLL. 6 helical membrane-spanning segments follow: residues 12–32, 47–67, 100–120, 184–204, 222–242, and 285–305; these read ITAG…FEYL, IILP…VAAF, YNLL…IIPF, VQGT…QFTA, VITG…IDVV, and VGIS…LLGF.

It belongs to the mitochondrial carrier (TC 2.A.29) family.

It localises to the mitochondrion inner membrane. This is an uncharacterized protein from Saccharomyces cerevisiae (strain ATCC 204508 / S288c) (Baker's yeast).